The following is a 265-amino-acid chain: Energy-coupling factor transporter transmembrane protein EcfT (265 aa).

Transmembrane regions (helical) follow at residues 29–49 (IILF…AILI), 73–93 (VWIL…GGTV), 110–130 (AIFI…LTLT), 143–163 (LLGP…MMSI), and 242–262 (FTWR…VIGW).

The protein belongs to the energy-coupling factor EcfT family. As to quaternary structure, forms a stable energy-coupling factor (ECF) transporter complex composed of 2 membrane-embedded substrate-binding proteins (S component), 2 ATP-binding proteins (A component) and 2 transmembrane proteins (T component). May be able to interact with more than 1 S component at a time.

It localises to the cell membrane. Its function is as follows. Transmembrane (T) component of an energy-coupling factor (ECF) ABC-transporter complex. Unlike classic ABC transporters this ECF transporter provides the energy necessary to transport a number of different substrates. In Brevibacillus brevis (strain 47 / JCM 6285 / NBRC 100599), this protein is Energy-coupling factor transporter transmembrane protein EcfT.